We begin with the raw amino-acid sequence, 182 residues long: Peptidyl-tRNA hydrolase (182 aa).

Tyr14 lines the tRNA pocket. Catalysis depends on His19, which acts as the Proton acceptor. Phe64, Asn66, and Asn112 together coordinate tRNA.

It belongs to the PTH family. Monomer.

The protein resides in the cytoplasm. The catalysed reaction is an N-acyl-L-alpha-aminoacyl-tRNA + H2O = an N-acyl-L-amino acid + a tRNA + H(+). Functionally, hydrolyzes ribosome-free peptidyl-tRNAs (with 1 or more amino acids incorporated), which drop off the ribosome during protein synthesis, or as a result of ribosome stalling. Catalyzes the release of premature peptidyl moieties from peptidyl-tRNA molecules trapped in stalled 50S ribosomal subunits, and thus maintains levels of free tRNAs and 50S ribosomes. In Wolbachia sp. subsp. Drosophila simulans (strain wRi), this protein is Peptidyl-tRNA hydrolase.